The following is a 443-amino-acid chain: MSFLDLPEGLPERIIQCNSPYTVRFGVRLRGRMYSFIGWRSVREHCEPVKGDIRYASNADAEEVEALAALMTLKCSLVDVPFGGSKGALKIDPRGWTPQELEHITRRFTQEMNKRPDRARRQCVGSDIGTGEREMAWMMDEFRRANPTDVVTSGACVTGKPLSKGGIAGRAESTGRGVQFAIQSSLRDTRTPGLDGRRNLKGASTVIQGFGNVGYHAARFLSEEDDARVTVLAERDGYVANPEGLSIEALKQHQIRTGSILGFDGAKSIAGDMCGVEQPCDVLIPAAMENAIHAENAERMKAHLVVEAANGPVTFEADEILRSRGVTILPDLYVNAGGVVVSYFERVKNLTHIPFGLMERRRRERGNHTIATALERMTGKESPADMRDEFLEGGAEIDLVRSGLEDVMRSTWTRIADLMEQQPELGDYRTAAYVASIRQVADL.

Lys86 is a catalytic residue.

This sequence belongs to the Glu/Leu/Phe/Val dehydrogenases family.

It carries out the reaction L-glutamate + NAD(+) + H2O = 2-oxoglutarate + NH4(+) + NADH + H(+). It catalyses the reaction L-glutamate + NADP(+) + H2O = 2-oxoglutarate + NH4(+) + NADPH + H(+). The sequence is that of Probable glutamate dehydrogenase from Sinorhizobium fredii (strain NBRC 101917 / NGR234).